Reading from the N-terminus, the 201-residue chain is Ribonuclease HII (201 aa).

One can recognise an RNase H type-2 domain in the interval 10–200; the sequence is LIEAGCDEAG…LGDGQLELFS (191 aa). Positions 16, 17, and 108 each coordinate a divalent metal cation.

This sequence belongs to the RNase HII family. Mn(2+) serves as cofactor. The cofactor is Mg(2+).

Its subcellular location is the cytoplasm. It catalyses the reaction Endonucleolytic cleavage to 5'-phosphomonoester.. Endonuclease that specifically degrades the RNA of RNA-DNA hybrids. The sequence is that of Ribonuclease HII from Bacteroides fragilis (strain YCH46).